The chain runs to 79 residues: Mycoredoxin 1 (79 aa).

Residues 1–79 form the Glutaredoxin domain; the sequence is MSNVTIYATD…EVIAKIEALA (79 aa).

This sequence belongs to the glutaredoxin family.

The protein localises to the cytoplasm. The enzyme catalyses [mycoredoxin]-L-cysteine + arseno-mycothiol + H(+) = [mycoredoxin]-S-mycothiol-L-cysteine + arsenite. In terms of biological role, involved in defense against toxic arsenate. Involved in the mycothiol/myoredoxin redox pathway which uses a mycothioltransferase mechanism; functions as a monothiol mixed disulfide reductase and is recycled by a second mycothiol forming mycothione which in turn is reduced in a NADPH-dependent manner. This is Mycoredoxin 1 (mrx1) from Corynebacterium glutamicum (strain ATCC 13032 / K051).